The sequence spans 1456 residues: MRLPLLLVFASVIPGAVLLLDTRQFLIYNEDHKRCVDAVSPSAVQTAACNQDAESQKFRWVSESQIMSVAFKLCLGVPSKTDWVAITLYACDSKSEFQKWECKNDTLLGIKGEDLFFNYGNRQEKNIMLYKGSGLWSRWKIYGTTDNLCSRGYEAMYTLLGNANGATCAFPFKFENKWYADCTSAGRSDGWLWCGTTTDYDTDKLFGYCPLKFEGSESLWNKDPLTSVSYQINSKSALTWHQARKSCQQQNAELLSITEIHEQTYLTGLTSSLTSGLWIGLNSLSFNSGWQWSDRSPFRYLNWLPGSPSAEPGKSCVSLNPGKNAKWENLECVQKLGYICKKGNTTLNSFVIPSESDVPTHCPSQWWPYAGHCYKIHRDEKKIQRDALTTCRKEGGDLTSIHTIEELDFIISQLGYEPNDELWIGLNDIKIQMYFEWSDGTPVTFTKWLRGEPSHENNRQEDCVVMKGKDGYWADRGCEWPLGYICKMKSRSQGPEIVEVEKGCRKGWKKHHFYCYMIGHTLSTFAEANQTCNNENAYLTTIEDRYEQAFLTSFVGLRPEKYFWTGLSDIQTKGTFQWTIEEEVRFTHWNSDMPGRKPGCVAMRTGIAGGLWDVLKCDEKAKFVCKHWAEGVTHPPKPTTTPEPKCPEDWGASSRTSLCFKLYAKGKHEKKTWFESRDFCRALGGDLASINNKEEQQTIWRLITASGSYHKLFWLGLTYGSPSEGFTWSDGSPVSYENWAYGEPNNYQNVEYCGELKGDPTMSWNDINCEHLNNWICQIQKGQTPKPEPTPAPQDNPPVTEDGWVIYKDYQYYFSKEKETMDNARAFCKRNFGDLVSIQSESEKKFLWKYVNRNDAQSAYFIGLLISLDKKFAWMDGSKVDYVSWATGEPNFANEDENCVTMYSNSGFWNDINCGYPNAFICQRHNSSINATTVMPTMPSVPSGCKEGWNFYSNKCFKIFGFMEEERKNWQEARKACIGFGGNLVSIQNEKEQAFLTYHMKDSTFSAWTGLNDVNSEHTFLWTDGRGVHYTNWGKGYPGGRRSSLSYEDADCVVIIGGASNEAGKWMDDTCDSKRGYICQTRSDPSLTNPPATIQTDGFVKYGKSSYSLMRQKFQWHEAETYCKLHNSLIASILDPYSNAFAWLQMETSNERVWIALNSNLTDNQYTWTDKWRVRYTNWAADEPKLKSACVYLDLDGYWKTAHCNESFYFLCKRSDEIPATEPPQLPGRCPESDHTAWIPFHGHCYYIESSYTRNWGQASLECLRMGSSLVSIESAAESSFLSYRVEPLKSKTNFWIGLFRNVEGTWLWINNSPVSFVNWNTGDPSGERNDCVALHASSGFWSNIHCSSYKGYICKRPKIIDAKPTHELLTTKADTRKMDPSKPSSNVAGVVIIVILLILTGAGLAAYFFYKKRRVHLPQEGAFENTLYFNSQSSPGTSDMKDLVGNIEQNEHSVI.

Positions 1-18 are cleaved as a signal peptide; sequence MRLPLLLVFASVIPGAVL. At 19–1389 the chain is on the extracellular side; that stretch reads LLDTRQFLIY…DPSKPSSNVA (1371 aa). The Ricin B-type lectin domain occupies 22–142; it reads TRQFLIYNED…SGLWSRWKIY (121 aa). Disulfide bonds link Cys-35–Cys-49 and Cys-74–Cys-91. N-linked (GlcNAc...) asparagine glycosylation is present at Asn-104. In terms of domain architecture, Fibronectin type-II spans 163-211; sequence ANGATCAFPFKFENKWYADCTSAGRSDGWLWCGTTTDYDTDKLFGYCPL. Intrachain disulfides connect Cys-168-Cys-194, Cys-182-Cys-209, Cys-247-Cys-340, and Cys-316-Cys-332. Positions 225–341 constitute a C-type lectin 1 domain; sequence LTSVSYQINS…CVQKLGYICK (117 aa). Asn-344 is a glycosylation site (N-linked (GlcNAc...) asparagine). C-type lectin domains are found at residues 369-487, 511-626, 655-778, and 807-923; these read YAGH…YICK, HHFY…FVCK, RTSL…WICQ, and YKDY…FICQ. Cystine bridges form between Cys-391–Cys-486 and Cys-463–Cys-478. An N-linked (GlcNAc...) asparagine glycan is attached at Asn-529. Intrachain disulfides connect Cys-532/Cys-625, Cys-600/Cys-617, Cys-646/Cys-659, Cys-680/Cys-777, Cys-753/Cys-769, Cys-828/Cys-922, and Cys-899/Cys-914. N-linked (GlcNAc...) asparagine glycans are attached at residues Asn-926 and Asn-930. 3 C-type lectin domains span residues 952-1080, 1102-1213, and 1241-1356; these read YSNK…YICQ, YGKS…FLCK, and FHGH…YICK. 6 cysteine pairs are disulfide-bonded: Cys-977–Cys-1079, Cys-1052–Cys-1071, Cys-1123–Cys-1212, Cys-1190–Cys-1204, Cys-1263–Cys-1355, and Cys-1332–Cys-1347. The N-linked (GlcNAc...) asparagine glycan is linked to Asn-1160. Asn-1205 is a glycosylation site (N-linked (GlcNAc...) asparagine). Residues 1390 to 1410 form a helical membrane-spanning segment; it reads GVVIIVILLILTGAGLAAYFF. At 1411–1456 the chain is on the cytoplasmic side; that stretch reads YKKRRVHLPQEGAFENTLYFNSQSSPGTSDMKDLVGNIEQNEHSVI.

As to quaternary structure, (Microbial infection) Interacts with Dengue virus. In terms of assembly, (Microbial infection) May act as a receptor for hepatitis B virus, enabling uptake of the virus in hepatic dendritic cells.

It is found in the endosome membrane. The protein localises to the cell membrane. Its function is as follows. Mediates the endocytosis of glycoproteins by macrophages. Binds both sulfated and non-sulfated polysaccharide chains. (Microbial infection) Acts as a phagocytic receptor for bacteria, fungi and other pathogens. In terms of biological role, (Microbial infection) Acts as a receptor for Dengue virus envelope protein E. Functionally, (Microbial infection) Interacts with Hepatitis B virus envelope protein. This Homo sapiens (Human) protein is Macrophage mannose receptor 1 (MRC1).